The chain runs to 163 residues: Lipoprotein signal peptidase (163 aa).

4 helical membrane-spanning segments follow: residues 9 to 29, 42 to 62, 67 to 87, and 93 to 113; these read AWPW…SKYL, ILPF…SFLG, WQII…ILWL, and SEIM…GNFI. Residues Asp-123 and Asp-141 contribute to the active site. Residues 137 to 157 traverse the membrane as a helical segment; that stretch reads FNVADSAICVGVFLLIVYMLL.

This sequence belongs to the peptidase A8 family.

It is found in the cell inner membrane. It carries out the reaction Release of signal peptides from bacterial membrane prolipoproteins. Hydrolyzes -Xaa-Yaa-Zaa-|-(S,diacylglyceryl)Cys-, in which Xaa is hydrophobic (preferably Leu), and Yaa (Ala or Ser) and Zaa (Gly or Ala) have small, neutral side chains.. Its pathway is protein modification; lipoprotein biosynthesis (signal peptide cleavage). Its function is as follows. This protein specifically catalyzes the removal of signal peptides from prolipoproteins. The chain is Lipoprotein signal peptidase from Coxiella burnetii (strain Dugway 5J108-111).